Reading from the N-terminus, the 221-residue chain is Ras-related protein Rab-28 (221 aa).

At Ser-2 the chain carries N-acetylserine. Phosphoserine is present on Ser-8. GTP contacts are provided by Gly-21, Gly-24, Lys-25, Thr-26, Ser-27, Gly-38, Lys-39, Tyr-41, and Thr-44. A Mg(2+)-binding site is contributed by Thr-26. The tract at residues 35-49 is switch I; sequence ETFGKQYKQTIGLDF. Mg(2+) is bound by residues Thr-44 and Asp-68. The interval 68–85 is switch II; that stretch reads DIGGQTIGGKMLDKYIYG. The GTP site is built by Gly-71, Asn-129, Lys-130, Asp-132, Ala-160, and Lys-161. Cysteine methyl ester is present on Cys-218. A lipid anchor (S-farnesyl cysteine) is attached at Cys-218. A propeptide spans 219–221 (removed in mature form); the sequence is AVQ.

This sequence belongs to the small GTPase superfamily. Rab family. Interacts (prenylated form) with PDE6D; the interaction promotes RAB28 delivery to the photoreceptor outer segments. Interacts with KCNJ13; the interaction may facilitate cone outer segments phagocytosis. Interacts with RELA; the interaction contributes to RELA transport from cytoplasm to nucleus. Mg(2+) serves as cofactor. In terms of processing, isoprenylated. As to expression, testis, brain, and to much lower levels heart, skeletal muscle and fat cells. Expressed in the retina.

It localises to the cell membrane. It is found in the cytoplasm. Its subcellular location is the cytoskeleton. The protein localises to the cilium basal body. The protein resides in the nucleus. The catalysed reaction is GTP + H2O = GDP + phosphate + H(+). With respect to regulation, regulated by guanine nucleotide exchange factors (GEFs) which promote the exchange of bound GDP for free GTP. Regulated by GTPase activating proteins (GAPs) which increase the GTP hydrolysis activity. Inhibited by GDP dissociation inhibitors (GDIs). Functionally, the small GTPases Rab are key regulators of intracellular membrane trafficking, from the formation of transport vesicles to their fusion with membranes. Rabs cycle between an inactive GDP-bound form and an active GTP-bound form that is able to recruit to membranes different sets of downstream effectors directly responsible for vesicle formation, movement, tethering and fusion. RAB28 is required for shedding and phagocytosis of cone cell outer segments (OS) discs in the retina. Also participates in nuclear factor kappa-B p65/RELA nuclear transport in endothelial cells. The protein is Ras-related protein Rab-28 of Rattus norvegicus (Rat).